We begin with the raw amino-acid sequence, 532 residues long: Nitrogenase molybdenum-iron protein alpha chain (532 aa).

[8Fe-7S] cluster-binding residues include Cys62, Cys88, and Cys153. Residues Cys271 and His489 each contribute to the [7Fe-Mo-9S-C-homocitryl] cluster site.

It belongs to the NifD/NifK/NifE/NifN family. As to quaternary structure, tetramer of two alpha and two beta chains. Forms complex with the iron protein (nitrogenase component 2). [8Fe-7S] cluster is required as a cofactor. It depends on [7Fe-Mo-9S-C-homocitryl] cluster as a cofactor.

The catalysed reaction is N2 + 8 reduced [2Fe-2S]-[ferredoxin] + 16 ATP + 16 H2O = H2 + 8 oxidized [2Fe-2S]-[ferredoxin] + 2 NH4(+) + 16 ADP + 16 phosphate + 6 H(+). In terms of biological role, this molybdenum-iron protein is part of the nitrogenase complex that catalyzes the key enzymatic reactions in nitrogen fixation. This chain is Nitrogenase molybdenum-iron protein alpha chain (nifD2), found in Methanosarcina barkeri.